The following is a 195-amino-acid chain: Fe/S biogenesis protein NfuA (195 aa).

Residues Cys-152 and Cys-155 each coordinate [4Fe-4S] cluster.

This sequence belongs to the NfuA family. In terms of assembly, homodimer. Requires [4Fe-4S] cluster as cofactor.

Involved in iron-sulfur cluster biogenesis. Binds a 4Fe-4S cluster, can transfer this cluster to apoproteins, and thereby intervenes in the maturation of Fe/S proteins. Could also act as a scaffold/chaperone for damaged Fe/S proteins. In Vibrio cholerae serotype O1 (strain ATCC 39541 / Classical Ogawa 395 / O395), this protein is Fe/S biogenesis protein NfuA.